A 356-amino-acid chain; its full sequence is Adenine deaminase (356 aa).

Zn(2+) contacts are provided by His-23, His-25, and His-211. Glu-214 (proton donor) is an active-site residue. Residue Asp-292 participates in Zn(2+) binding. Residue Asp-293 participates in substrate binding.

Belongs to the metallo-dependent hydrolases superfamily. Adenosine and AMP deaminases family. Adenine deaminase type 2 subfamily. It depends on Zn(2+) as a cofactor.

The protein resides in the cytoplasm. It is found in the nucleus. It catalyses the reaction adenine + H2O + H(+) = hypoxanthine + NH4(+). Its function is as follows. Catalyzes the hydrolytic deamination of adenine to hypoxanthine. Plays an important role in the purine salvage pathway and in nitrogen catabolism. The chain is Adenine deaminase from Candida albicans (strain SC5314 / ATCC MYA-2876) (Yeast).